The primary structure comprises 32 residues: Calcitonin (32 aa).

A disulfide bridge links Cys1 with Cys7. Pro32 is subject to Proline amide.

The protein belongs to the calcitonin family.

The protein resides in the secreted. Calcitonin is a peptide hormone that causes a rapid but short-lived drop in the level of calcium and phosphate in blood by promoting the incorporation of those ions in the bones. Calcitonin function is mediated by the calcitonin receptor/CALCR and the CALCR-RAMP2 (AMYR2) receptor complex. The protein is Calcitonin (CALCA) of Sus scrofa (Pig).